A 630-amino-acid polypeptide reads, in one-letter code: Polypeptide N-acetylgalactosaminyltransferase 5 (630 aa).

At 1–20 the chain is on the cytoplasmic side; the sequence is MTFSTFTRKMRGRMRSNTCR. Residues 21–38 form a helical; Signal-anchor for type II membrane protein membrane-spanning segment; that stretch reads IVLLTSLVWVIFDFVLIA. Residues 39 to 630 lie on the Lumenal side of the membrane; the sequence is RYSDCIGKDG…MESKFKWQAH (592 aa). Asparagine 166 is a glycosylation site (N-linked (GlcNAc...) asparagine). 5 disulfides stabilise this stretch: cysteine 177/cysteine 410, cysteine 401/cysteine 479, cysteine 513/cysteine 530, cysteine 553/cysteine 568, and cysteine 594/cysteine 611. A catalytic subdomain A region spans residues 186-296; that stretch reads LPTTSIVIVF…EGWLEPLLAR (111 aa). Positions 227 and 257 each coordinate substrate. Mn(2+) is bound by residues aspartate 280 and histidine 282. The tract at residues 356–418 is catalytic subdomain B; sequence PLRTPTMAGG…PCSHVGHVFR (63 aa). Tryptophan 387 contacts substrate. Histidine 415 lines the Mn(2+) pocket. The substrate site is built by arginine 418 and tyrosine 423. The Ricin B-type lectin domain maps to 500–622; sequence YYLGEIRNAE…YGKGQQWLME (123 aa).

This sequence belongs to the glycosyltransferase 2 family. GalNAc-T subfamily. It depends on Mn(2+) as a cofactor. As to expression, expressed during oogenesis, in the somatically derived follicle cells that surround the developing oocyte, which are involved in the maturation of the oocyte and construction of the egg shell, as well as playing a role in subsequent embryonic pattern formation. During embryonic stages 9-11, expressed in the primordium of the foregut, midgut and hindgut. Expressed in salivary glands from embryonic stage 12 onwards. During embryonic stages 12-13, expressed in the posterior midgut and hindgut. During embryonic stages 14-17, expressed in the hindgut and the posterior spiracles. Expression is also detected in the epidermis and antennomaxillary complex at embryonic stages 16-17. In third instar larvae, ubiquitously expressed in wing, eye-antennal, leg and haltere imaginal disks.

It is found in the golgi apparatus membrane. The enzyme catalyses L-seryl-[protein] + UDP-N-acetyl-alpha-D-galactosamine = a 3-O-[N-acetyl-alpha-D-galactosaminyl]-L-seryl-[protein] + UDP + H(+). It catalyses the reaction L-threonyl-[protein] + UDP-N-acetyl-alpha-D-galactosamine = a 3-O-[N-acetyl-alpha-D-galactosaminyl]-L-threonyl-[protein] + UDP + H(+). It participates in protein modification; protein glycosylation. Functionally, catalyzes the initial reaction in O-linked oligosaccharide biosynthesis, the transfer of an N-acetyl-D-galactosamine residue to a serine or threonine residue on the protein receptor. It can both act as a peptide transferase that transfers GalNAc onto unmodified peptide substrates, and as a glycopeptide transferase that requires the prior addition of a GalNAc on a peptide before adding additional GalNAc moieties. Prefers EA2 as substrate. In the larval midgut, required for O-glycosylation of apical and luminal proteins within copper cells enabling proper gut acidification. This is Polypeptide N-acetylgalactosaminyltransferase 5 from Drosophila melanogaster (Fruit fly).